The chain runs to 429 residues: Transcription factor IIIA (429 aa).

Residues 1–45 form a disordered region; sequence MGGEVLNNEGMPLAELKQETIPISRSESSESLNSLTSTRSSSSNR. Positions 24–44 are enriched in low complexity; it reads SRSESSESLNSLTSTRSSSSN. C2H2-type zinc fingers lie at residues 49-74, 80-102, 108-130, 134-159, 163-186, 194-219, 222-244, 253-277, and 365-389; these read YFCD…LSVH, FQCD…LYTH, FQCS…EVTH, FICP…LSVH, LTCP…SKHH, YQCT…KNDH, LKCP…MIIH, WKCH…GSIH, and YRCF…IDKH. Over residues 406–416 the composition is skewed to basic and acidic residues; it reads KTLVDQNHKEP. The interval 406 to 429 is disordered; it reads KTLVDQNHKEPFIIQKETQSAGDK.

It is found in the nucleus. In terms of biological role, interacts with the internal control region (ICR) of approximately 50 bases within the 5S RNA genes, is required for correct transcription of these genes by RNA polymerase III. Also binds the transcribed 5S RNA's. This Saccharomyces cerevisiae (strain ATCC 204508 / S288c) (Baker's yeast) protein is Transcription factor IIIA (PZF1).